We begin with the raw amino-acid sequence, 178 residues long: Interleukin-10 (178 aa).

A signal peptide spans 1–18; sequence MHSSALLCCLVFLTGVRA. 2 disulfides stabilise this stretch: C30/C126 and C80/C132. N134 carries N-linked (GlcNAc...) asparagine glycosylation.

It belongs to the IL-10 family. As to quaternary structure, homodimer. Interacts with IL10RA and IL10RB.

The protein resides in the secreted. Major immune regulatory cytokine that acts on many cells of the immune system where it has profound anti-inflammatory functions, limiting excessive tissue disruption caused by inflammation. Mechanistically, IL10 binds to its heterotetrameric receptor comprising IL10RA and IL10RB leading to JAK1 and STAT2-mediated phosphorylation of STAT3. In turn, STAT3 translocates to the nucleus where it drives expression of anti-inflammatory mediators. Targets antigen-presenting cells (APCs) such as macrophages and monocytes and inhibits their release of pro-inflammatory cytokines including granulocyte-macrophage colony-stimulating factor /GM-CSF, granulocyte colony-stimulating factor/G-CSF, IL-1 alpha, IL-1 beta, IL-6, IL-8 and TNF-alpha. Also interferes with antigen presentation by reducing the expression of MHC-class II and co-stimulatory molecules, thereby inhibiting their ability to induce T cell activation. In addition, controls the inflammatory response of macrophages by reprogramming essential metabolic pathways including mTOR signaling. In Callithrix jacchus (White-tufted-ear marmoset), this protein is Interleukin-10 (IL10).